Consider the following 421-residue polypeptide: Serine hydroxymethyltransferase (421 aa).

(6S)-5,6,7,8-tetrahydrofolate contacts are provided by residues L121 and 125-127 (GHL). K229 is subject to N6-(pyridoxal phosphate)lysine.

The protein belongs to the SHMT family. Homodimer. Pyridoxal 5'-phosphate is required as a cofactor.

Its subcellular location is the cytoplasm. It carries out the reaction (6R)-5,10-methylene-5,6,7,8-tetrahydrofolate + glycine + H2O = (6S)-5,6,7,8-tetrahydrofolate + L-serine. The protein operates within one-carbon metabolism; tetrahydrofolate interconversion. It functions in the pathway amino-acid biosynthesis; glycine biosynthesis; glycine from L-serine: step 1/1. Functionally, catalyzes the reversible interconversion of serine and glycine with tetrahydrofolate (THF) serving as the one-carbon carrier. This reaction serves as the major source of one-carbon groups required for the biosynthesis of purines, thymidylate, methionine, and other important biomolecules. Also exhibits THF-independent aldolase activity toward beta-hydroxyamino acids, producing glycine and aldehydes, via a retro-aldol mechanism. In Haemophilus influenzae (strain PittEE), this protein is Serine hydroxymethyltransferase.